Here is a 478-residue protein sequence, read N- to C-terminus: Ribulose bisphosphate carboxylase large chain (478 aa).

Residues 1–2 (MS) constitute a propeptide that is removed on maturation. Residue proline 3 is modified to N-acetylproline. Residue lysine 14 is modified to N6,N6,N6-trimethyllysine. Positions 123 and 173 each coordinate substrate. The active-site Proton acceptor is lysine 175. Lysine 177 lines the substrate pocket. Residues lysine 201, aspartate 203, and glutamate 204 each contribute to the Mg(2+) site. An N6-carboxylysine modification is found at lysine 201. The active-site Proton acceptor is histidine 294. Substrate is bound by residues arginine 295, histidine 327, and serine 379.

Belongs to the RuBisCO large chain family. Type I subfamily. As to quaternary structure, heterohexadecamer of 8 large chains and 8 small chains; disulfide-linked. The disulfide link is formed within the large subunit homodimers. The cofactor is Mg(2+). The disulfide bond which can form in the large chain dimeric partners within the hexadecamer appears to be associated with oxidative stress and protein turnover.

It localises to the plastid. Its subcellular location is the chloroplast. It catalyses the reaction 2 (2R)-3-phosphoglycerate + 2 H(+) = D-ribulose 1,5-bisphosphate + CO2 + H2O. The enzyme catalyses D-ribulose 1,5-bisphosphate + O2 = 2-phosphoglycolate + (2R)-3-phosphoglycerate + 2 H(+). In terms of biological role, ruBisCO catalyzes two reactions: the carboxylation of D-ribulose 1,5-bisphosphate, the primary event in carbon dioxide fixation, as well as the oxidative fragmentation of the pentose substrate in the photorespiration process. Both reactions occur simultaneously and in competition at the same active site. In Lemna minor (Common duckweed), this protein is Ribulose bisphosphate carboxylase large chain.